We begin with the raw amino-acid sequence, 273 residues long: MSPKRDGLGTDDGLHSQVLQEQVSTGDNLHECDSQGRSKDTLVREEKTYKCKECGSVFNKNSLLVRHQQIHTGVKPYEYQECGKAFPEKVDFVRHMRIHTGEKPCKCVECRKVFNRRSHLLCYRQIHTGENPYECSECGKTFSYHSVFIQHRVTHTGEKLFGCKECGKTFYYNSSLTRHMKIHTGEKPCKCSECGKTFTYHSVFFRHSMTHTSGKPYECKECGKGFYYSYSLTRHTRSHTGEKPYECLEHRKAFGYHSAFAQQSKIHSGGKNL.

The C2H2-type 1 zinc-finger motif lies at 49–71 (YKCKECGSVFNKNSLLVRHQQIH). The C2H2-type 2; degenerate zinc-finger motif lies at 77 to 99 (YEYQECGKAFPEKVDFVRHMRIH). The C2H2-type 3; atypical zinc finger occupies 105–127 (CKCVECRKVFNRRSHLLCYRQIH). 4 C2H2-type zinc fingers span residues 133-155 (YECS…RVTH), 161-183 (FGCK…MKIH), 187-211 (KPCK…SMTH), and 217-239 (YECK…TRSH).

It belongs to the krueppel C2H2-type zinc-finger protein family.

The protein resides in the nucleus. Its function is as follows. May be involved in transcriptional regulation. In Pan troglodytes (Chimpanzee), this protein is Zinc finger protein 80 (ZNF80).